Reading from the N-terminus, the 445-residue chain is tRNA modification GTPase MnmE (445 aa).

(6S)-5-formyl-5,6,7,8-tetrahydrofolate is bound by residues R20, E79, and K119. Positions 215–371 (GLKLAIIGPP…ILKNIEEIAE (157 aa)) constitute a TrmE-type G domain. N225 contacts K(+). Residues 225 to 230 (NAGKSS), 244 to 250 (SNIAGTT), and 269 to 272 (DTAG) contribute to the GTP site. Position 229 (S229) interacts with Mg(2+). Positions 244, 246, and 249 each coordinate K(+). T250 serves as a coordination point for Mg(2+). (6S)-5-formyl-5,6,7,8-tetrahydrofolate is bound at residue K445.

Belongs to the TRAFAC class TrmE-Era-EngA-EngB-Septin-like GTPase superfamily. TrmE GTPase family. As to quaternary structure, homodimer. Heterotetramer of two MnmE and two MnmG subunits. K(+) serves as cofactor.

The protein resides in the cytoplasm. Exhibits a very high intrinsic GTPase hydrolysis rate. Involved in the addition of a carboxymethylaminomethyl (cmnm) group at the wobble position (U34) of certain tRNAs, forming tRNA-cmnm(5)s(2)U34. This is tRNA modification GTPase MnmE from Rickettsia bellii (strain RML369-C).